We begin with the raw amino-acid sequence, 341 residues long: Dual oxidase maturation factor 1 (341 aa).

Over 1–24 (MAALGHTLPFYTGTKPTFPMDTTL) the chain is Extracellular. Residues 25-45 (AVIITIFLTALVTFIIILPGI) traverse the membrane as a helical segment. Residues 46–51 (RGKTRL) lie on the Cytoplasmic side of the membrane. A helical membrane pass occupies residues 52-72 (FWLLRVVTSLFIGAVILAVNF). The Extracellular segment spans residues 73-183 (SSEWSVGHVN…RLAGHYASAM (111 aa)). Residues N84, N109, and N121 are each glycosylated (N-linked (GlcNAc...) asparagine). A helical transmembrane segment spans residues 184–204 (LWVAFLCWLLANVMLSMPVLV). A topological domain (cytoplasmic) is located at residue Y205. The helical transmembrane segment at 206–226 (GGHMLLATGLFQLLALFFFSM) threads the bilayer. Over 227 to 249 (TTSLISPCPLRLGTAVLHTHHGP) the chain is Extracellular. The chain crosses the membrane as a helical span at residues 250–270 (AFWITLATGLLCILLGLVMAV). Over 271–341 (AHRMQPHRLK…EHPKESDCSL (71 aa)) the chain is Cytoplasmic.

It belongs to the DUOXA family. May interact with NUMB.

Its subcellular location is the membrane. May be required for the maturation and the transport from the endoplasmic reticulum to the plasma membrane of functional DUOX1. The chain is Dual oxidase maturation factor 1 (Duoxa1) from Mus musculus (Mouse).